Reading from the N-terminus, the 237-residue chain is Eukaryotic translation initiation factor 3 subunit J (237 aa).

The segment at 20–64 (ANNINKWEGEDDDEDVKESWEDEEEKKDEEKPTKTEAPAKTKPNK) is disordered. A compositionally biased stretch (acidic residues) spans 28–46 (GEDDDEDVKESWEDEEEKK). Over residues 47-58 (DEEKPTKTEAPA) the composition is skewed to basic and acidic residues. Residues 63–115 (NKVLKAKLLEQECLEKEEEAKRLANMSTEEKLAEKLRLQKIQEESDLKSALET) adopt a coiled-coil conformation.

It belongs to the eIF-3 subunit J family. As to quaternary structure, component of the eukaryotic translation initiation factor 3 (eIF-3) complex. The eIF-3 complex interacts with pix.

It localises to the cytoplasm. Component of the eukaryotic translation initiation factor 3 (eIF-3) complex, which is involved in protein synthesis of a specialized repertoire of mRNAs and, together with other initiation factors, stimulates binding of mRNA and methionyl-tRNAi to the 40S ribosome. The eIF-3 complex specifically targets and initiates translation of a subset of mRNAs involved in cell proliferation. The polypeptide is Eukaryotic translation initiation factor 3 subunit J (Drosophila grimshawi (Hawaiian fruit fly)).